We begin with the raw amino-acid sequence, 845 residues long: ATP-binding cassette sub-family F member 1 (845 aa).

Positions 1–261 are disordered; sequence MPKAPKQQPP…HLSKKEKKKL (261 aa). 2 positions are modified to phosphoserine: S22 and S24. Residues 29 to 39 show a composition bias toward basic residues; sequence KKGKKDKKIKK. Positions 47-64 are enriched in basic and acidic residues; the sequence is VEDKQAGEEEKVLKEKEQ. A compositionally biased stretch (basic residues) spans 73–85; it reads QKKKRDTRKGRRK. Residue S105 is modified to Phosphoserine. Residue T108 is modified to Phosphothreonine. Phosphoserine; by CK2 is present on residues S109 and S140. The span at 147–160 shows a compositional bias: basic and acidic residues; it reads EKHPPKPAKPEKNR. S166 carries the post-translational modification Phosphoserine. Residues 206-226 are compositionally biased toward basic and acidic residues; sequence EIIKEKEPPKQGKEKAKKAEQ. The segment covering 227-241 has biased composition (acidic residues); the sequence is GSEEEGEGEEEEEEG. S228 is subject to Phosphoserine. Residues 304-548 form the ABC transporter 1 domain; that stretch reads IKLEKFSISA…MYQQKQKELL (245 aa). 336-343 provides a ligand contact to ATP; that stretch reads GPNGKGKT. Over residues 559-580 the composition is skewed to basic and acidic residues; that stretch reads KELKAGGKSTKQAEKQTKEALT. The tract at residues 559-602 is disordered; it reads KELKAGGKSTKQAEKQTKEALTRKQQKCRRKNQDEESQEAPELL. S595 is subject to Phosphoserine. One can recognise an ABC transporter 2 domain in the interval 625–840; sequence LGLHGVTFGY…VLEALGEVMV (216 aa). 658-665 is an ATP binding site; the sequence is GPNGVGKS.

This sequence belongs to the ABC transporter superfamily. ABCF family. EF3 subfamily. As to quaternary structure, isoform 2 interacts (via N-terminus) with EIF2S1; the interaction is independent of its phosphorylated status. Isoform 2 associates (via both ABC transporter domains) with the ribosomes. Post-translationally, isoform 2 is phosphorylated at phosphoserine and phosphothreonine. Isoform 2 phosphorylation on Ser-109 and Ser-140 by CK2 inhibits association of EIF2 with ribosomes. As to expression, ubiquitous.

The protein resides in the cytoplasm. Its subcellular location is the nucleus. The protein localises to the nucleoplasm. It is found in the nucleus envelope. In terms of biological role, isoform 2 is required for efficient Cap- and IRES-mediated mRNA translation initiation. Isoform 2 is not involved in the ribosome biogenesis. In Homo sapiens (Human), this protein is ATP-binding cassette sub-family F member 1 (ABCF1).